A 270-amino-acid chain; its full sequence is MNKSLFKSGCLVRTAHVILTWIITLILFLHNTDLRRCQERGDLLQPLVFSSVLLLSVLLYFTVSLMDPGFVLSDSQTETASGDGDEELEAMIPQEQNSIKQRRCGYCFLLQPMRARHCKWCKRCVRRFDHHCPWIDNCVGELNHRWFLLYLCVQFTAVCWGLQSAWSGFISAPSWQQWFTQNVFLLVAFAVTAVFSVVLLLLLCIHAYLASVNCTTWEFMSRHRILYLKHVDSEENPFDRGVFCNLWSFCCVCGTVAWEKMYIRHNNASV.

The Cytoplasmic portion of the chain corresponds to 1-8; the sequence is MNKSLFKS. Residues 9–29 form a helical membrane-spanning segment; the sequence is GCLVRTAHVILTWIITLILFL. Topologically, residues 30–45 are lumenal; that stretch reads HNTDLRRCQERGDLLQ. The chain crosses the membrane as a helical span at residues 46–66; it reads PLVFSSVLLLSVLLYFTVSLM. At 67 to 145 the chain is on the cytoplasmic side; sequence DPGFVLSDSQ…DNCVGELNHR (79 aa). The DHHC domain maps to 102 to 152; it reads RRCGYCFLLQPMRARHCKWCKRCVRRFDHHCPWIDNCVGELNHRWFLLYLC. Cys-132 functions as the S-palmitoyl cysteine intermediate in the catalytic mechanism. A helical membrane pass occupies residues 146 to 166; that stretch reads WFLLYLCVQFTAVCWGLQSAW. Topologically, residues 167 to 182 are lumenal; the sequence is SGFISAPSWQQWFTQN. Residues 183-203 traverse the membrane as a helical segment; sequence VFLLVAFAVTAVFSVVLLLLL. Over 204–270 the chain is Cytoplasmic; the sequence is CIHAYLASVN…MYIRHNNASV (67 aa).

Belongs to the DHHC palmitoyltransferase family.

Its subcellular location is the golgi apparatus membrane. The protein resides in the endoplasmic reticulum membrane. It catalyses the reaction L-cysteinyl-[protein] + hexadecanoyl-CoA = S-hexadecanoyl-L-cysteinyl-[protein] + CoA. Functionally, palmitoyltransferase that catalyzes the addition of palmitate onto various protein substrates. Has a palmitoyltransferase activity toward gephyrin/GPHN, regulating its clustering at synapses and its function in gamma-aminobutyric acid receptor clustering. Acts as an inhibitor of the NLRP3 inflammasome by mediating palmitoylation of NLRP3, thereby promoting NLRP3 degradation by the chaperone-mediated autophagy (CMA) process. This is Palmitoyltransferase ZDHHC12-A from Danio rerio (Zebrafish).